The primary structure comprises 436 residues: Tol-Pal system protein TolB (436 aa).

The N-terminal stretch at 1 to 28 (MMKCSFFRAILVAVGLMAAAVVATPANA) is a signal peptide.

The protein belongs to the TolB family. As to quaternary structure, the Tol-Pal system is composed of five core proteins: the inner membrane proteins TolA, TolQ and TolR, the periplasmic protein TolB and the outer membrane protein Pal. They form a network linking the inner and outer membranes and the peptidoglycan layer.

The protein localises to the periplasm. Part of the Tol-Pal system, which plays a role in outer membrane invagination during cell division and is important for maintaining outer membrane integrity. In Rhizobium etli (strain CIAT 652), this protein is Tol-Pal system protein TolB.